Consider the following 376-residue polypeptide: Anhydro-N-acetylmuramic acid kinase (376 aa).

ATP is bound at residue 22 to 29 (GTSMDGAD).

The protein belongs to the anhydro-N-acetylmuramic acid kinase family.

It carries out the reaction 1,6-anhydro-N-acetyl-beta-muramate + ATP + H2O = N-acetyl-D-muramate 6-phosphate + ADP + H(+). It participates in amino-sugar metabolism; 1,6-anhydro-N-acetylmuramate degradation. Its pathway is cell wall biogenesis; peptidoglycan recycling. Catalyzes the specific phosphorylation of 1,6-anhydro-N-acetylmuramic acid (anhMurNAc) with the simultaneous cleavage of the 1,6-anhydro ring, generating MurNAc-6-P. Is required for the utilization of anhMurNAc either imported from the medium or derived from its own cell wall murein, and thus plays a role in cell wall recycling. The polypeptide is Anhydro-N-acetylmuramic acid kinase (Neisseria gonorrhoeae (strain NCCP11945)).